A 492-amino-acid chain; its full sequence is Virion host shutoff protein (492 aa).

Disordered stretches follow at residues 110–130 (EEAS…SRPS), 288–307 (SQAR…LESM), and 334–371 (EDDY…ELVQ).

The protein belongs to the herpesviridae VHS protein family. As to quaternary structure, interacts with human EIF4H, EIF4A1 and EIF4A2; interaction with eIF4AI and EIF4A2 presumably allows Vhs protein to associate with the eIF4F cap-binding complex.

The protein resides in the virion. Minor structural protein that acts as an endoribonuclease during lytic infection. Degrades host mRNAs in the cytoplasm by cutting them at preferred sites, including some in regions of translation initiation. Together with inhibition of host splicing by ICP27, contributes to an overall decrease in host protein synthesis. Also, after the onset of viral transcription, accelerates the turnover of viral mRNA, thereby facilitating the sequential expression of different classes of viral genes. Binds translation initiation factors eIF4H, eIF4AI, and eIF4AII, thereby may interact directly with the translation initiation complex and thus digest specifically mRNAs. Also impedes antigen presentation by major histocompatibility complex class I and class II molecules, inhibits secretion of cytokines that would otherwise recruit lymphocytes and neutrophils cells to the site of infection and blocks the activation of dendritic cells. Impedes the alpha/beta interferon-mediated response to infection. Inhibits the integrated stress response (ISR) in the infected cell, this function requires the endonuclease activity. Stress granule formation is thus inhibited, which allows protein synthesis and viral replication. This chain is Virion host shutoff protein (UL41), found in Homo sapiens (Human).